We begin with the raw amino-acid sequence, 492 residues long: 2,3-bisphosphoglycerate-independent phosphoglycerate mutase (492 aa).

Mn(2+)-binding residues include aspartate 11 and serine 61. The Phosphoserine intermediate role is filled by serine 61. Substrate is bound by residues histidine 118, 147-148 (RD), arginine 178, arginine 184, 248-251 (RNDR), and lysine 320. 5 residues coordinate Mn(2+): aspartate 386, histidine 390, aspartate 427, histidine 428, and histidine 445.

Belongs to the BPG-independent phosphoglycerate mutase family. As to quaternary structure, monomer. Mn(2+) serves as cofactor.

The enzyme catalyses (2R)-2-phosphoglycerate = (2R)-3-phosphoglycerate. It functions in the pathway carbohydrate degradation; glycolysis; pyruvate from D-glyceraldehyde 3-phosphate: step 3/5. Its function is as follows. Catalyzes the interconversion of 2-phosphoglycerate and 3-phosphoglycerate. The chain is 2,3-bisphosphoglycerate-independent phosphoglycerate mutase from Campylobacter jejuni subsp. jejuni serotype O:2 (strain ATCC 700819 / NCTC 11168).